Reading from the N-terminus, the 145-residue chain is D-aminoacyl-tRNA deacylase (145 aa).

The Gly-cisPro motif, important for rejection of L-amino acids signature appears at 137–138; sequence GP.

Belongs to the DTD family. In terms of assembly, homodimer.

It localises to the cytoplasm. The enzyme catalyses glycyl-tRNA(Ala) + H2O = tRNA(Ala) + glycine + H(+). The catalysed reaction is a D-aminoacyl-tRNA + H2O = a tRNA + a D-alpha-amino acid + H(+). An aminoacyl-tRNA editing enzyme that deacylates mischarged D-aminoacyl-tRNAs. Also deacylates mischarged glycyl-tRNA(Ala), protecting cells against glycine mischarging by AlaRS. Acts via tRNA-based rather than protein-based catalysis; rejects L-amino acids rather than detecting D-amino acids in the active site. By recycling D-aminoacyl-tRNA to D-amino acids and free tRNA molecules, this enzyme counteracts the toxicity associated with the formation of D-aminoacyl-tRNA entities in vivo and helps enforce protein L-homochirality. This is D-aminoacyl-tRNA deacylase from Ectopseudomonas mendocina (strain ymp) (Pseudomonas mendocina).